Reading from the N-terminus, the 537-residue chain is Probable protein kinase UbiB (537 aa).

The helical transmembrane segment at 24–44 (LLFEQPLLPWWLASLRLLMPW) threads the bilayer. The 369-residue stretch at 126–494 (RFDVEPLASA…RRRQGDNWAL (369 aa)) folds into the Protein kinase domain. Residues 132–140 (LASASVAQV) and Lys154 each bind ATP. Asp289 functions as the Proton acceptor in the catalytic mechanism. 2 helical membrane passes run 493-513 (ALRL…AGAV) and 515-535 (LSAP…YLIV).

Belongs to the ABC1 family. UbiB subfamily.

Its subcellular location is the cell inner membrane. It participates in cofactor biosynthesis; ubiquinone biosynthesis [regulation]. In terms of biological role, is probably a protein kinase regulator of UbiI activity which is involved in aerobic coenzyme Q (ubiquinone) biosynthesis. The protein is Probable protein kinase UbiB of Pseudomonas entomophila (strain L48).